A 253-amino-acid polypeptide reads, in one-letter code: MLTKRIIPCLDVHAGRVVKGVQFVNIIDAGDPVEAAAFYDKAGADELTFLDITASSDARSIMLDVVSRVAEQVFIPFTVGGGIRTAEDFRRILKAGADKVGVNSAALKRPELISEAAWKFGSQCVVLAIDAKKRADGSGWDTYLNGGRVNTGKDAVEWAIEAEKLGAGEILLTSMDKDGTKDGYDIELTRTVSENVKIPVIASGGAGKMEHFKDALVDGKADAVLAASLFHFREMEIRDLKGYLKNNGIEIRL.

Catalysis depends on residues Asp-11 and Asp-130.

Belongs to the HisA/HisF family. As to quaternary structure, heterodimer of HisH and HisF.

Its subcellular location is the cytoplasm. The catalysed reaction is 5-[(5-phospho-1-deoxy-D-ribulos-1-ylimino)methylamino]-1-(5-phospho-beta-D-ribosyl)imidazole-4-carboxamide + L-glutamine = D-erythro-1-(imidazol-4-yl)glycerol 3-phosphate + 5-amino-1-(5-phospho-beta-D-ribosyl)imidazole-4-carboxamide + L-glutamate + H(+). Its pathway is amino-acid biosynthesis; L-histidine biosynthesis; L-histidine from 5-phospho-alpha-D-ribose 1-diphosphate: step 5/9. Its function is as follows. IGPS catalyzes the conversion of PRFAR and glutamine to IGP, AICAR and glutamate. The HisF subunit catalyzes the cyclization activity that produces IGP and AICAR from PRFAR using the ammonia provided by the HisH subunit. This Ruminiclostridium cellulolyticum (strain ATCC 35319 / DSM 5812 / JCM 6584 / H10) (Clostridium cellulolyticum) protein is Imidazole glycerol phosphate synthase subunit HisF.